Consider the following 92-residue polypeptide: Large ribosomal subunit protein bL27 (92 aa).

The segment at 1–26 is disordered; it reads MAHKKGASSSSNGRDSESKRLGVKRF.

It belongs to the bacterial ribosomal protein bL27 family.

The sequence is that of Large ribosomal subunit protein bL27 from Corynebacterium aurimucosum (strain ATCC 700975 / DSM 44827 / CIP 107346 / CN-1) (Corynebacterium nigricans).